The primary structure comprises 297 residues: Phosphatidylserine decarboxylase proenzyme (297 aa).

Catalysis depends on charge relay system; for autoendoproteolytic cleavage activity residues Asp100, His157, and Ser263. Residue Ser263 is the Schiff-base intermediate with substrate; via pyruvic acid; for decarboxylase activity of the active site. Position 263 is a pyruvic acid (Ser); by autocatalysis (Ser263).

Belongs to the phosphatidylserine decarboxylase family. PSD-B subfamily. Prokaryotic type I sub-subfamily. In terms of assembly, heterodimer of a large membrane-associated beta subunit and a small pyruvoyl-containing alpha subunit. Pyruvate is required as a cofactor. Post-translationally, is synthesized initially as an inactive proenzyme. Formation of the active enzyme involves a self-maturation process in which the active site pyruvoyl group is generated from an internal serine residue via an autocatalytic post-translational modification. Two non-identical subunits are generated from the proenzyme in this reaction, and the pyruvate is formed at the N-terminus of the alpha chain, which is derived from the carboxyl end of the proenzyme. The autoendoproteolytic cleavage occurs by a canonical serine protease mechanism, in which the side chain hydroxyl group of the serine supplies its oxygen atom to form the C-terminus of the beta chain, while the remainder of the serine residue undergoes an oxidative deamination to produce ammonia and the pyruvoyl prosthetic group on the alpha chain. During this reaction, the Ser that is part of the protease active site of the proenzyme becomes the pyruvoyl prosthetic group, which constitutes an essential element of the active site of the mature decarboxylase.

Its subcellular location is the cell membrane. The catalysed reaction is a 1,2-diacyl-sn-glycero-3-phospho-L-serine + H(+) = a 1,2-diacyl-sn-glycero-3-phosphoethanolamine + CO2. The protein operates within phospholipid metabolism; phosphatidylethanolamine biosynthesis; phosphatidylethanolamine from CDP-diacylglycerol: step 2/2. In terms of biological role, catalyzes the formation of phosphatidylethanolamine (PtdEtn) from phosphatidylserine (PtdSer). This Glaesserella parasuis serovar 5 (strain SH0165) (Haemophilus parasuis) protein is Phosphatidylserine decarboxylase proenzyme.